The chain runs to 78 residues: Conotoxin ArMKLT2-0312 (78 aa).

The signal sequence occupies residues 1-22; that stretch reads MKLTCVLIIAVLFLTACQLITA. Residues 23-45 constitute a propeptide that is removed on maturation; sequence DYSRDKQEYRAVRLRDAMRYSRV. Glutamine 48 is subject to Pyrrolidone carboxylic acid. Intrachain disulfides connect cysteine 49/cysteine 62, cysteine 56/cysteine 67, and cysteine 61/cysteine 75.

This sequence belongs to the conotoxin O1 superfamily. In terms of tissue distribution, expressed by the venom duct.

It is found in the secreted. This is Conotoxin ArMKLT2-0312 from Conus arenatus (Sand-dusted cone).